The following is a 480-amino-acid chain: Protein nucleotidyltransferase YdiU (480 aa).

Residues Gly-84, Gly-86, Arg-87, Lys-107, Asp-119, Gly-120, Arg-170, and Arg-177 each coordinate ATP. The active-site Proton acceptor is the Asp-246. Residues Asn-247 and Asp-256 each contribute to the Mg(2+) site. Asp-256 provides a ligand contact to ATP.

This sequence belongs to the SELO family. Mg(2+) serves as cofactor. The cofactor is Mn(2+).

It catalyses the reaction L-seryl-[protein] + ATP = 3-O-(5'-adenylyl)-L-seryl-[protein] + diphosphate. The catalysed reaction is L-threonyl-[protein] + ATP = 3-O-(5'-adenylyl)-L-threonyl-[protein] + diphosphate. It carries out the reaction L-tyrosyl-[protein] + ATP = O-(5'-adenylyl)-L-tyrosyl-[protein] + diphosphate. The enzyme catalyses L-histidyl-[protein] + UTP = N(tele)-(5'-uridylyl)-L-histidyl-[protein] + diphosphate. It catalyses the reaction L-seryl-[protein] + UTP = O-(5'-uridylyl)-L-seryl-[protein] + diphosphate. The catalysed reaction is L-tyrosyl-[protein] + UTP = O-(5'-uridylyl)-L-tyrosyl-[protein] + diphosphate. Nucleotidyltransferase involved in the post-translational modification of proteins. It can catalyze the addition of adenosine monophosphate (AMP) or uridine monophosphate (UMP) to a protein, resulting in modifications known as AMPylation and UMPylation. This Pseudoalteromonas atlantica (strain T6c / ATCC BAA-1087) protein is Protein nucleotidyltransferase YdiU.